Reading from the N-terminus, the 210-residue chain is Uracil phosphoribosyltransferase (210 aa).

Residues arginine 78, arginine 103, and 130-138 contribute to the 5-phospho-alpha-D-ribose 1-diphosphate site; that span reads DPMLATGGT. Uracil is bound by residues isoleucine 193 and 198–200; that span reads GDA. Aspartate 199 lines the 5-phospho-alpha-D-ribose 1-diphosphate pocket.

The protein belongs to the UPRTase family. Mg(2+) serves as cofactor.

The catalysed reaction is UMP + diphosphate = 5-phospho-alpha-D-ribose 1-diphosphate + uracil. It functions in the pathway pyrimidine metabolism; UMP biosynthesis via salvage pathway; UMP from uracil: step 1/1. With respect to regulation, allosterically activated by GTP. In terms of biological role, catalyzes the conversion of uracil and 5-phospho-alpha-D-ribose 1-diphosphate (PRPP) to UMP and diphosphate. The chain is Uracil phosphoribosyltransferase from Stenotrophomonas maltophilia (strain K279a).